The following is a 3364-amino-acid chain: MLRIKEVKKYNNRLGFPAGKEVRIRPLLEAGGFARGPIYVKYGRELSKHDPSSRSMAWNATVFDTALNHPTRPWTVTVVGGKKMVLGVRKEGLGFSEDDPPRSLNVKGGDDMADENYGGGNSTIVLVKSGGKDFAIGLDDLKELNSFGIGAGNGKLSLALGNPVNVLTGVVLPVEQRDGSVAYVAVNSDTKSVIYKVDAKGLQKNQKIDVNVRASAEKILLTKNNELLHISPQGLNVYSVQGSASTFKYFCPYFSSFGGWSRRFVDTVTLMDEGGNQEALIGTGPKGIEYMPVDEKCKNYVVEGVQDAKHAVVAPGATKEGNDIKVLGVYNGELCLLTLEVVDAVEPKLDQGSPAKPSAERVKATKSSKVTVRSGALSKPVSWLRDSLDEASFKNIVDKLSGKIRFSFPLVDLQGRMGLPIKLVVYYDESDGEDMSVLGRHWTLGRDCIVLDHGNTVFEDKQDYYLVKDQMKIRLERDWTKPSANGKVLFNMVGNKDATFEYTAREEKWEVSDGKIRYVYGMNNQGVVSVPGWADWYGPSANYDSKKIHSVQWNLVEISSVAHRDVKLKYTYTPLDPSTHTMHLLSITDDSNKTTIKFSYKTIEGLGKQVSSGLVKEHKFINNKLLEKVEIDSPSTAQVLKLTSTKIDSLYYLESIKQDDDPDPVLGFEYNKDDKLKPRVQQIRLPSKSVVDFKYTKQAIATQQFEQEIAKMADLYTGNEYSLEIEKTVGETDLYVRLKDSAGKNDFIKNQSIRIESYRGFKIKSYSPFMMHSYIAILVRYAEEKEKLHNKIYILNKGEDDSWKLDTTNNNSRVSEDKKFKYDFQEDSFVYYHSKKVHFEYKKSGTKVWSYTSKDIGDVDAFTLMNRGAVYCKNDLVLIRWDALGKLQQETLSDAKSKPSISDVDTFFEYIDVQGTFPEDEAEAKKEVDDYKRDLKESLSDYGLILYNNVVALRTIKLSFTGRITVKVLLYLLKHDYTVSSRSSIELQGGDLAKFNLTLDVFDEHKTKNTNDLDKYRFEFKKQGSKFKLTYIEATDKDNKPTKPSSQNEKLIGQYERRMKIPLDFEKYMMQVNQEGIIVNDHQIIHDNGNFIAKQLDRDTLKLTKFKIPLGAFSNFKKDSDGDEIKLCTKTEQERTESCVSLQTNSARNVSIKYPYYLVTQKKNDIKVLPLKINSRGWEDSVDYRGEILHGSSSHAAMVTTRMSDQKTIVRPLKALNKINKIYAQVISEEKLTTPYDSYVIKYEYEDPVVSMNQVAFKTTIVVPGGGKSATGYYRETNDLQDNQQIVQVMTADNQVFDPEYVKRMNEMQQEEDKQRDGAQLDAEQTITDKSGYHPILKTTPYSANQELVQFLGFEDYEDMTGWTVNRRPIQESNIRRNEFSATGRNFLLLRKGEELIAEFPNTAYYDTFIASTWIRTTQETAVGSTTDMLSLYVDNKPMKGTIKQTIDEWIYVEADSREIAVPESTAVKRVHFKIIVKPTGADDVHVDHVRLSPVNFNFEGSVYDARIGQRTATIQTNGFVSRRLYDAYNRRIAEVDETGNIKYLASYSKRVGNKKDEKKREGGISSRLQMRAKHSWVESFSPYTMEKRWQIGGAATVEPNQAILQGQIISKEKFSSESICIRLVYSMSGSSQLSLTIGKTTVVVKPNAVQYKGHTATTPSNAELVIFATPKLTSIWVDGHLRIEAPETHAKFNNEAVSLQTSGPVGIKDVIVMEDAEIQVSYLNRDSKPLQEILLLDSSNVLIRQMMYDVIGRRVAETVWVQKSLIDGRSTAFKAFQYHDDFVSNDNPTDRNYFLNTGPMQGYVATATNTIYEGYPYSQTVYYNNPLEIRHKVGHPGVKNSIKGAFVHQYAIASDLAFIQRNYPKNEGYRQEEEKSPNGKKHVVVYNRRNKKVAEYTQVKDYNNILTTYIYDQHGNQIQMLPPSYYHEKSRSGDYQPEKQVVASPWAVTSKYDSTGEFITSKETPDGGRVEFIYNEYNQLRYQIHYKEDKQADKIVYFLYNIFGRMCEAGQVPANPTTLQQVRETTKSHQAIPNRDQAVYFDYGETESEPSLRGRIQRTVKKNKEVLFSEVMFFDEESNIIRKSYISPTTNETLSLVYLQENDKVSGIQYPFGVDGKQLILKYKHNLRGEIVEVARVEQKTSGQTEFIPIAGIDHDAEGKVTKISHNYGDSKFDQTYKYVAPGYLVEIANNFLTEKLYYTEKGYGCEPTGDGSILRTEFKASWHDKCDQNLIPLTARAFVSGGIDFTTAETCFDALLNLGYIDTTGRPVKTFYPDLETGLPMKCATPSNWRYISEKMLEQGYPEHYGHAYDYGSHGELIAAKSFVGKEKDSLTAPLSKASFANAGMKSHELDRFWDSLSRSINKVEGTKAIFEGTQQLTTGLVGSVIHKPKLESLLEGKGGDSSICTPWSSGDRTEEAKCKREYQQAFDKLKLKQVIQSLQEPVRKNVLRILKNTLASMLGNSPGDVESFSIDPNGNHGVFYTGFKRFELKYKHQKNQIATIKEGTKQQEKMIVHDDEGNVIKALHKKIDKIEYDPLTQRVSRIEMSDRSRTLEFGYDFRGERTFKRVRNKDNDIISVNYYVRDNKGNVLVEYKQEYPNPKDTNKPINTVTAYIHGPLGLLGFFRNNKYYNVLLDHEGSTRLVIHQGKVVAAYDYLPYGQMIRKYGSNPEAHIAFRYTGQEFDEETGLYNYHARLYDPDIGRFFQMDPMEQYASPYKYAGNSPVSQIDPDGQIAVTLVLMIIGAIVGAYLGAASANNSWNPAKWAWGDKKTWIGLFAGAIMGAFAVYGGAATFSYFTAMFGGSMIAGALATGVISVAGAFLGAAAASNQWNPAKWDWTSPAVWNGLLSGASIAVSFPSGFVGITRSFMSISSNLVKMIYASLMVGGFLLFVYLGGGMANNFNFQISQWDWKSPRTWFGMIEGASTIFMGTAGTAKHGAAKVYNVVKPNGLKMIWHKVNIPSKAFTMRRVKDTIILTWYKNGQSISKQILKTTVKADLAKIPKDFIMIHRGFFMPYQRIGYAAIAMPSMAGLMFKKNQYFFTNHPNGTLTKHVRKKRSAPMSSSAASPSVSNFLNDFFENMSELFDSFFSQTEHSHQDSQSSLSIGASYGRPSNESYHKSFQKLCYSPDSDGNQIICPQRESTVNIFSKGETFAPEAFGQDLFSRCLPLTWHDRPSIACDGEQTTFIYTPNQNIRVFDMVDGWLMLARIAPAALRNLKAGFSFLRDVVFSDEREQTVQVNDLSRCKQDLEVELLDLKRVMLKKQPNEVKWAQPILNDLEDDIGEFLSERKPSEKEFELLQERLSALREEIMENSSVATELNLSTLIGDMLKKMDGVNVGLNGDVRDMISTLSGMVPFSSSNLLA.

Beta-propeller regions lie at residues 1 to 344 (MLRI…VVDA) and 705 to 1216 (FEQE…LKAL). Asparagine 59 is a glycosylation site (N-linked (GlcNAc...) asparagine). Cystine bridges form between cysteine 251–cysteine 297 and cysteine 1128–cysteine 1139. A rhs/YD-repeats region spans residues 345–2733 (VEPKLDQGSP…PVSQIDPDGQ (2389 aa)). N-linked (GlcNAc...) asparagine glycosylation occurs at asparagine 1149. The carbohydrate-binding module (CBM) stretch occupies residues 1345 to 1494 (NQELVQFLGF…VHVDHVRLSP (150 aa)). Residues 1575–1715 (HSWVESFSPY…VGIKDVIVME (141 aa)) are lectin carbohydrate-recognition domain (lectin-CRD). The tract at residues 2225–2304 (HDKCDQNLIP…SEKMLEQGYP (80 aa)) is wedge domain. 2 disulfides stabilise this stretch: cysteine 2253/cysteine 2285 and cysteine 2407/cysteine 2421. The next 5 helical transmembrane spans lie at 2734 to 2754 (IAVT…LGAA), 2774 to 2794 (IGLF…AATF), 2805 to 2825 (MIAG…LGAA), 2844 to 2864 (WNGL…FVGI), and 2878 to 2898 (MIYA…GGGM). The tract at residues 3126–3216 (YSPDSDGNQI…ARIAPAALRN (91 aa)) is tox-SGS.

Post-translationally, probably cleaved at the C-terminus. In terms of tissue distribution, female saliva (at protein level). Female salivary gland (at protein level). Not detected in female carcass without salivary glands. Not detected in male tissues.

Its subcellular location is the cell membrane. The protein localises to the secreted. Its function is as follows. (Microbial infection) Facilitates, but is not essential for, invasion of salivary glands by Plasmodium gallinaceum. Plays a role in Plasmodium gallinaceum oocyst development in mosquito midgut. Functionally, (Microbial infection) Probably facilitates Zika virus replication in salivary glands. This chain is Salivary gland surface protein 1, found in Aedes aegypti (Yellowfever mosquito).